The following is a 155-amino-acid chain: MFTIDFSDHTGLVKDAWYKQIEDLLEFAKKEEHIEDDAELSVTFVDKQEIQEINRTYRDKDKVTDVISFALEEDEPEIDFSGLDIPRVLGDIIICTDVAQEQANNYGHSFERELGFLALHGFLHLLGYDHMTEADEKEMFGRQDTILNAYGLTRG.

3 residues coordinate Zn(2+): His-120, His-124, and His-130.

It belongs to the endoribonuclease YbeY family. Zn(2+) is required as a cofactor.

Its subcellular location is the cytoplasm. Functionally, single strand-specific metallo-endoribonuclease involved in late-stage 70S ribosome quality control and in maturation of the 3' terminus of the 16S rRNA. In Staphylococcus aureus (strain MSSA476), this protein is Endoribonuclease YbeY.